Here is a 374-residue protein sequence, read N- to C-terminus: Alcohol dehydrogenase class-3 (374 aa).

Serine 2 carries the post-translational modification N-acetylserine. 7 residues coordinate Zn(2+): cysteine 45, histidine 67, cysteine 97, cysteine 100, cysteine 103, cysteine 111, and cysteine 174. Lysine 233 is modified (N6-succinyllysine). Serine 247 is modified (phosphoserine). The residue at position 315 (lysine 315) is an N6-succinyllysine. Serine 324 and serine 351 each carry phosphoserine.

Belongs to the zinc-containing alcohol dehydrogenase family. Class-III subfamily. In terms of assembly, homodimer. Zn(2+) serves as cofactor.

The protein localises to the cytoplasm. It carries out the reaction a primary alcohol + NAD(+) = an aldehyde + NADH + H(+). The enzyme catalyses a secondary alcohol + NAD(+) = a ketone + NADH + H(+). It catalyses the reaction S-(hydroxymethyl)glutathione + NADP(+) = S-formylglutathione + NADPH + H(+). The catalysed reaction is S-(hydroxymethyl)glutathione + NAD(+) = S-formylglutathione + NADH + H(+). It carries out the reaction 20-oxo-(5Z,8Z,11Z,14Z)-eicosatetraenoate + NAD(+) + H2O = (5Z,8Z,11Z,14Z)-eicosatetraenedioate + NADH + 2 H(+). The enzyme catalyses 20-hydroxy-(5Z,8Z,11Z,14Z)-eicosatetraenoate + NAD(+) = 20-oxo-(5Z,8Z,11Z,14Z)-eicosatetraenoate + NADH + H(+). It catalyses the reaction S-nitrosoglutathione + NADH + H(+) = S-(hydroxysulfenamide)glutathione + NAD(+). Its function is as follows. Catalyzes the oxidation of long-chain primary alcohols and the oxidation of S-(hydroxymethyl) glutathione. Also oxidizes long chain omega-hydroxy fatty acids, such as 20-HETE, producing both the intermediate aldehyde, 20-oxoarachidonate and the end product, a dicarboxylic acid, (5Z,8Z,11Z,14Z)-eicosatetraenedioate. Class-III ADH is remarkably ineffective in oxidizing ethanol. Required for clearance of cellular formaldehyde, a cytotoxic and carcinogenic metabolite that induces DNA damage. Also acts as a S-nitroso-glutathione reductase by catalyzing the NADH-dependent reduction of S-nitrosoglutathione, thereby regulating protein S-nitrosylation. The polypeptide is Alcohol dehydrogenase class-3 (Equus caballus (Horse)).